A 327-amino-acid chain; its full sequence is tRNA uridine(34) hydroxylase (327 aa).

Positions 130–224 (LDEDTVVLDT…YGKDPEVRGE (95 aa)) constitute a Rhodanese domain. The active-site Cysteine persulfide intermediate is C184.

Belongs to the TrhO family.

The catalysed reaction is uridine(34) in tRNA + AH2 + O2 = 5-hydroxyuridine(34) in tRNA + A + H2O. Catalyzes oxygen-dependent 5-hydroxyuridine (ho5U) modification at position 34 in tRNAs. This is tRNA uridine(34) hydroxylase from Streptococcus suis (strain 98HAH33).